The primary structure comprises 611 residues: Poly(3-hydroxyalkanoate) polymerase subunit PhaC (611 aa).

Cys-349 is an active-site residue.

This sequence belongs to the PHA/PHB synthase family. Type I PhaC subfamily. As to quaternary structure, monomer.

The protein resides in the cytoplasm. It catalyses the reaction (3R)-3-hydroxybutanoyl-CoA + [(3R)-hydroxybutanoate](n) = [(3R)-hydroxybutanoate](n+1) + CoA. The protein operates within biopolymer metabolism; poly-(R)-3-hydroxybutanoate biosynthesis. In terms of biological role, polymerizes D(-)-3-hydroxybutyryl-CoA to create PHB which consists of thousands of hydroxybutyrate molecules linked end to end. PHB serves as an intracellular energy reserve material when cells grow under conditions of nutrient limitation. This chain is Poly(3-hydroxyalkanoate) polymerase subunit PhaC, found in Rhizobium meliloti (strain 1021) (Ensifer meliloti).